Reading from the N-terminus, the 100-residue chain is Large ribosomal subunit protein uL23 (100 aa).

It belongs to the universal ribosomal protein uL23 family. In terms of assembly, part of the 50S ribosomal subunit. Contacts protein L29, and trigger factor when it is bound to the ribosome.

Its function is as follows. One of the early assembly proteins it binds 23S rRNA. One of the proteins that surrounds the polypeptide exit tunnel on the outside of the ribosome. Forms the main docking site for trigger factor binding to the ribosome. The polypeptide is Large ribosomal subunit protein uL23 (Buchnera aphidicola subsp. Acyrthosiphon pisum (strain 5A)).